A 191-amino-acid polypeptide reads, in one-letter code: dCTP deaminase (191 aa).

Residues Lys112–Arg117, Thr136–Glu138, Gln157, Tyr173, and Gln183 contribute to the dCTP site. Residue Glu138 is the Proton donor/acceptor of the active site.

This sequence belongs to the dCTP deaminase family. Homotrimer.

It carries out the reaction dCTP + H2O + H(+) = dUTP + NH4(+). Its pathway is pyrimidine metabolism; dUMP biosynthesis; dUMP from dCTP (dUTP route): step 1/2. Its function is as follows. Catalyzes the deamination of dCTP to dUTP. The chain is dCTP deaminase from Xylella fastidiosa (strain 9a5c).